Reading from the N-terminus, the 555-residue chain is Inositol 1,4,5-trisphosphate receptor-interacting protein-like 1 (555 aa).

Residues 1-24 form the signal peptide; the sequence is MNVDAEASMAVISLLFLAVMYVVH. Over 25–103 the chain is Extracellular; sequence HPLMVSDRMD…WPFQADGQEG (79 aa). Residues 38 to 74 adopt a coiled-coil conformation; it reads LARSRQLEKRMSEEMRLLEMEFEERKRAAEQRQKAEN. The helical transmembrane segment at 104–124 threads the bilayer; that stretch reads PLGWMLGNLWNTGLFCLFLVF. At 125–555 the chain is on the cytoplasmic side; it reads ELLRQNMQHE…LPHAPLAAAP (431 aa).

It belongs to the ITPRIP family. In terms of tissue distribution, expressed in testis and tumoral cells.

It is found in the cell membrane. Its function is as follows. Functions as a ligand of CD3E, inhibiting TCR-CD3 complex signaling to regulate T cell activation. Induces stable CD3E-NCK1 binding, thereby preventing the CD3E-ZAP70 interaction and subsequently inhibiting the activation of the downstream ERK-NFkB signaling cascade and calcium influx. The chain is Inositol 1,4,5-trisphosphate receptor-interacting protein-like 1 from Homo sapiens (Human).